The chain runs to 122 residues: Large ribosomal subunit protein uL14 (122 aa).

Belongs to the universal ribosomal protein uL14 family. As to quaternary structure, part of the 50S ribosomal subunit. Forms a cluster with proteins L3 and L19. In the 70S ribosome, L14 and L19 interact and together make contacts with the 16S rRNA in bridges B5 and B8.

In terms of biological role, binds to 23S rRNA. Forms part of two intersubunit bridges in the 70S ribosome. The polypeptide is Large ribosomal subunit protein uL14 (Bordetella avium (strain 197N)).